The chain runs to 381 residues: Dual-specificity RNA methyltransferase RlmN (381 aa).

Glu-96 functions as the Proton acceptor in the catalytic mechanism. Residues 102-342 (TDDRGTLCVS…TRTTRGDDID (241 aa)) enclose the Radical SAM core domain. The cysteines at positions 109 and 345 are disulfide-linked. [4Fe-4S] cluster is bound by residues Cys-116, Cys-120, and Cys-123. S-adenosyl-L-methionine-binding positions include 170–171 (GE), Ser-202, 224–226 (SLH), and Asn-302. Cys-345 functions as the S-methylcysteine intermediate in the catalytic mechanism.

This sequence belongs to the radical SAM superfamily. RlmN family. [4Fe-4S] cluster is required as a cofactor.

It localises to the cytoplasm. It carries out the reaction adenosine(2503) in 23S rRNA + 2 reduced [2Fe-2S]-[ferredoxin] + 2 S-adenosyl-L-methionine = 2-methyladenosine(2503) in 23S rRNA + 5'-deoxyadenosine + L-methionine + 2 oxidized [2Fe-2S]-[ferredoxin] + S-adenosyl-L-homocysteine. The catalysed reaction is adenosine(37) in tRNA + 2 reduced [2Fe-2S]-[ferredoxin] + 2 S-adenosyl-L-methionine = 2-methyladenosine(37) in tRNA + 5'-deoxyadenosine + L-methionine + 2 oxidized [2Fe-2S]-[ferredoxin] + S-adenosyl-L-homocysteine. Its function is as follows. Specifically methylates position 2 of adenine 2503 in 23S rRNA and position 2 of adenine 37 in tRNAs. m2A2503 modification seems to play a crucial role in the proofreading step occurring at the peptidyl transferase center and thus would serve to optimize ribosomal fidelity. This chain is Dual-specificity RNA methyltransferase RlmN, found in Pseudomonas putida (strain GB-1).